A 203-amino-acid polypeptide reads, in one-letter code: Adenylyl-sulfate kinase (203 aa).

Residue 35–42 (GLSGSGKS) participates in ATP binding. The Phosphoserine intermediate role is filled by Ser109.

It belongs to the APS kinase family.

It catalyses the reaction adenosine 5'-phosphosulfate + ATP = 3'-phosphoadenylyl sulfate + ADP + H(+). Its pathway is sulfur metabolism; hydrogen sulfide biosynthesis; sulfite from sulfate: step 2/3. Catalyzes the synthesis of activated sulfate. This Geotalea daltonii (strain DSM 22248 / JCM 15807 / FRC-32) (Geobacter daltonii) protein is Adenylyl-sulfate kinase.